We begin with the raw amino-acid sequence, 101 residues long: Peroxisomal biogenesis factor 39 (101 aa).

It is found in the peroxisome. Its function is as follows. May be a peroxin involved in the PTS2-mediated protein import pathway. The polypeptide is Peroxisomal biogenesis factor 39 (Homo sapiens (Human)).